A 406-amino-acid polypeptide reads, in one-letter code: Cysteine desulfurase (406 aa).

Lys-226 carries the N6-(pyridoxal phosphate)lysine modification. Cys-364 acts as the Cysteine persulfide intermediate in catalysis.

The protein belongs to the class-V pyridoxal-phosphate-dependent aminotransferase family. Csd subfamily. In terms of assembly, homodimer. Interacts with SufE and the SufBCD complex composed of SufB, SufC and SufD. The interaction with SufE is required to mediate the direct transfer of the sulfur atom from the S-sulfanylcysteine. Requires pyridoxal 5'-phosphate as cofactor.

The protein localises to the cytoplasm. The catalysed reaction is (sulfur carrier)-H + L-cysteine = (sulfur carrier)-SH + L-alanine. It catalyses the reaction L-selenocysteine + AH2 = hydrogenselenide + L-alanine + A + H(+). It functions in the pathway cofactor biosynthesis; iron-sulfur cluster biosynthesis. Cysteine desulfurases mobilize the sulfur from L-cysteine to yield L-alanine, an essential step in sulfur metabolism for biosynthesis of a variety of sulfur-containing biomolecules. Component of the suf operon, which is activated and required under specific conditions such as oxidative stress and iron limitation. Acts as a potent selenocysteine lyase in vitro, that mobilizes selenium from L-selenocysteine. Selenocysteine lyase activity is however unsure in vivo. The protein is Cysteine desulfurase of Cronobacter sakazakii (strain ATCC BAA-894) (Enterobacter sakazakii).